The primary structure comprises 158 residues: NAD(P)H-quinone oxidoreductase subunit J, chloroplastic (158 aa).

The protein belongs to the complex I 30 kDa subunit family. NDH is composed of at least 16 different subunits, 5 of which are encoded in the nucleus.

The protein localises to the plastid. It localises to the chloroplast thylakoid membrane. The enzyme catalyses a plastoquinone + NADH + (n+1) H(+)(in) = a plastoquinol + NAD(+) + n H(+)(out). The catalysed reaction is a plastoquinone + NADPH + (n+1) H(+)(in) = a plastoquinol + NADP(+) + n H(+)(out). In terms of biological role, NDH shuttles electrons from NAD(P)H:plastoquinone, via FMN and iron-sulfur (Fe-S) centers, to quinones in the photosynthetic chain and possibly in a chloroplast respiratory chain. The immediate electron acceptor for the enzyme in this species is believed to be plastoquinone. Couples the redox reaction to proton translocation, and thus conserves the redox energy in a proton gradient. In Acorus calamus var. americanus (American sweet flag), this protein is NAD(P)H-quinone oxidoreductase subunit J, chloroplastic.